The sequence spans 305 residues: UDP-N-acetylenolpyruvoylglucosamine reductase 2 (305 aa).

Residues Val-33–Gly-197 enclose the FAD-binding PCMH-type domain. Arg-176 is a catalytic residue. Ser-226 (proton donor) is an active-site residue. Glu-296 is a catalytic residue.

Belongs to the MurB family. It depends on FAD as a cofactor.

The protein localises to the cytoplasm. The enzyme catalyses UDP-N-acetyl-alpha-D-muramate + NADP(+) = UDP-N-acetyl-3-O-(1-carboxyvinyl)-alpha-D-glucosamine + NADPH + H(+). It functions in the pathway cell wall biogenesis; peptidoglycan biosynthesis. Functionally, cell wall formation. The polypeptide is UDP-N-acetylenolpyruvoylglucosamine reductase 2 (Bacillus cereus (strain ATCC 10987 / NRS 248)).